The following is a 323-amino-acid chain: Putative HTH-type transcriptional regulatory protein Hlac_0273 (323 aa).

In terms of domain architecture, HTH cro/C1-type spans 132 to 189; the sequence is LADEREERGWSLGRLATELGVSRRTVSKYEDGMNASIEVAIQLEDLFNEPFSSPVDVL. A DNA-binding region (H-T-H motif) is located at residues 143-162; that stretch reads LGRLATELGVSRRTVSKYED. Positions 188-211 are disordered; sequence VLDGAGEVRDADPTPSAPETDPDD.

The sequence is that of Putative HTH-type transcriptional regulatory protein Hlac_0273 from Halorubrum lacusprofundi (strain ATCC 49239 / DSM 5036 / JCM 8891 / ACAM 34).